The following is a 118-amino-acid chain: Immunoglobulin heavy variable 4-30-2 (118 aa).

The N-terminal stretch at 1–19 (MKHLWFFLLLVAAPRWVLS) is a signal peptide. Residues 20–44 (QLQLQESGSGLVKPSQTLSLTCAVS) form a framework-1 region. In terms of domain architecture, Ig-like spans 20–118 (QLQLQESGSG…ADTAVYYCAR (99 aa)). Cysteine 41 and cysteine 116 are disulfide-bonded. Residues 45 to 54 (GGSISSGGYS) form a complementarity-determining-1 region. The tract at residues 55 to 71 (WSWIRQPPGKGLEWIGY) is framework-2. The interval 72 to 78 (IYHSGST) is complementarity-determining-2. The framework-3 stretch occupies residues 79 to 116 (YYNPSLKSRVTISVDRSKNQFSLKLSSVTAADTAVYYC). Residues 117 to 118 (AR) are complementarity-determining-3.

Immunoglobulins are composed of two identical heavy chains and two identical light chains; disulfide-linked.

The protein localises to the secreted. Its subcellular location is the cell membrane. Functionally, v region of the variable domain of immunoglobulin heavy chains that participates in the antigen recognition. Immunoglobulins, also known as antibodies, are membrane-bound or secreted glycoproteins produced by B lymphocytes. In the recognition phase of humoral immunity, the membrane-bound immunoglobulins serve as receptors which, upon binding of a specific antigen, trigger the clonal expansion and differentiation of B lymphocytes into immunoglobulins-secreting plasma cells. Secreted immunoglobulins mediate the effector phase of humoral immunity, which results in the elimination of bound antigens. The antigen binding site is formed by the variable domain of one heavy chain, together with that of its associated light chain. Thus, each immunoglobulin has two antigen binding sites with remarkable affinity for a particular antigen. The variable domains are assembled by a process called V-(D)-J rearrangement and can then be subjected to somatic hypermutations which, after exposure to antigen and selection, allow affinity maturation for a particular antigen. The sequence is that of Immunoglobulin heavy variable 4-30-2 from Homo sapiens (Human).